We begin with the raw amino-acid sequence, 407 residues long: Phosphopentomutase (407 aa).

Mn(2+)-binding residues include D10, D306, H311, D347, H348, and H359.

This sequence belongs to the phosphopentomutase family. The cofactor is Mn(2+).

It is found in the cytoplasm. It catalyses the reaction 2-deoxy-alpha-D-ribose 1-phosphate = 2-deoxy-D-ribose 5-phosphate. The catalysed reaction is alpha-D-ribose 1-phosphate = D-ribose 5-phosphate. It participates in carbohydrate degradation; 2-deoxy-D-ribose 1-phosphate degradation; D-glyceraldehyde 3-phosphate and acetaldehyde from 2-deoxy-alpha-D-ribose 1-phosphate: step 1/2. Isomerase that catalyzes the conversion of deoxy-ribose 1-phosphate (dRib-1-P) and ribose 1-phosphate (Rib-1-P) to deoxy-ribose 5-phosphate (dRib-5-P) and ribose 5-phosphate (Rib-5-P), respectively. The sequence is that of Phosphopentomutase from Salmonella dublin (strain CT_02021853).